The following is a 363-amino-acid chain: Putative F-box protein At4g22170 (363 aa).

In terms of domain architecture, F-box spans 7 to 58 (PNSWSDLPHDLLNLVFERLSFANFNRARSVCSSWYSASRQSVPKNQIHWLIL).

This Arabidopsis thaliana (Mouse-ear cress) protein is Putative F-box protein At4g22170.